Reading from the N-terminus, the 460-residue chain is Pentatricopeptide repeat-containing protein At5g43790 (460 aa).

PPR repeat units follow at residues Ser70–Phe107, Asn111–Phe142, Asp149–Pro179, Asp180–Pro214, Asn215–Leu249, Asn250–Arg280, Asp281–Pro315, Asp316–Pro351, and Lys352–Lys382. The type E motif; degenerate stretch occupies residues Leu387–Asn460.

The protein belongs to the PPR family. PCMP-E subfamily.

This Arabidopsis thaliana (Mouse-ear cress) protein is Pentatricopeptide repeat-containing protein At5g43790 (PCMP-E30).